Reading from the N-terminus, the 53-residue chain is ATP synthase protein 8 (53 aa).

Residues 9-29 (WLILFFIFSITLVIFNILNYF) form a helical membrane-spanning segment.

The protein belongs to the ATPase protein 8 family. In terms of assembly, F-type ATPases have 2 components, CF(1) - the catalytic core - and CF(0) - the membrane proton channel.

The protein localises to the mitochondrion membrane. Functionally, mitochondrial membrane ATP synthase (F(1)F(0) ATP synthase or Complex V) produces ATP from ADP in the presence of a proton gradient across the membrane which is generated by electron transport complexes of the respiratory chain. F-type ATPases consist of two structural domains, F(1) - containing the extramembraneous catalytic core and F(0) - containing the membrane proton channel, linked together by a central stalk and a peripheral stalk. During catalysis, ATP synthesis in the catalytic domain of F(1) is coupled via a rotary mechanism of the central stalk subunits to proton translocation. Part of the complex F(0) domain. Minor subunit located with subunit a in the membrane. This is ATP synthase protein 8 (mt:ATPase8) from Anopheles quadrimaculatus (Common malaria mosquito).